Consider the following 241-residue polypeptide: Ureidoacrylate amidohydrolase RutB (241 aa).

Asp-38 functions as the Proton acceptor in the catalytic mechanism. Lys-147 is a catalytic residue. Cys-180 serves as the catalytic Nucleophile.

Belongs to the isochorismatase family. RutB subfamily.

The enzyme catalyses (Z)-3-ureidoacrylate + H2O + H(+) = (Z)-3-aminoacrylate + NH4(+) + CO2. The catalysed reaction is (Z)-3-ureidoacrylate + H2O = (Z)-3-aminoacrylate + carbamate + H(+). It catalyses the reaction (Z)-2-methylureidoacrylate + H2O + H(+) = (Z)-2-methylaminoacrylate + NH4(+) + CO2. In terms of biological role, hydrolyzes ureidoacrylate to form aminoacrylate and carbamate. The carbamate hydrolyzes spontaneously, thereby releasing one of the nitrogen atoms of the pyrimidine ring as ammonia and one of its carbon atoms as CO2. In Haliangium ochraceum (strain DSM 14365 / JCM 11303 / SMP-2), this protein is Ureidoacrylate amidohydrolase RutB.